A 287-amino-acid chain; its full sequence is Large ribosomal subunit protein uL2 (287 aa).

Basic residues-rich tracts occupy residues 209–220 (GRNRWKARRPKV) and 258–287 (KTRKKKKQSNKLIVRRRRRSSKRSRGGRQS). The tract at residues 209 to 287 (GRNRWKARRP…SKRSRGGRQS (79 aa)) is disordered.

It belongs to the universal ribosomal protein uL2 family. Part of the 50S ribosomal subunit. Forms a bridge to the 30S subunit in the 70S ribosome.

Functionally, one of the primary rRNA binding proteins. Required for association of the 30S and 50S subunits to form the 70S ribosome, for tRNA binding and peptide bond formation. It has been suggested to have peptidyltransferase activity; this is somewhat controversial. Makes several contacts with the 16S rRNA in the 70S ribosome. The polypeptide is Large ribosomal subunit protein uL2 (Acaryochloris marina (strain MBIC 11017)).